We begin with the raw amino-acid sequence, 147 residues long: CLAVATA3/ESR (CLE)-related protein 4C (147 aa).

The N-terminal stretch at 1 to 21 (MATNTMLCLFVISVVLALAFA) is a signal peptide. Positions 21 to 83 (ATNKKGDEEP…SNQLPNNNWM (63 aa)) are required for secretion from the host cytoplasm to the host apoplasm. The N-linked (GlcNAc...) asparagine glycan is linked to Asn32. Disordered regions lie at residues 57 to 86 (GADA…MAPP) and 116 to 147 (RKTG…PIHH). Over residues 125-137 (HHEETTLEQEKRV) the composition is skewed to basic and acidic residues. The short motif at 136-147 (RVAGAGPDPIHH) is the CLE element.

This sequence belongs to the CLV3/ESR signal peptide family. Highly expressed exclusively within the dorsal esophageal gland cell during syncytium formation in host plants.

Its subcellular location is the secreted. The protein localises to the host cytoplasm. It localises to the host extracellular space. The protein resides in the extracellular space. It is found in the apoplast. Its function is as follows. Mimics host plant CLE extracellular signal peptides that regulate cell fate. May play a role in the differentiation or division of feeding cells (syncytia) induced in plant roots during infection. The chain is CLAVATA3/ESR (CLE)-related protein 4C (CLE-4C) from Globodera rostochiensis (Golden nematode worm).